The primary structure comprises 241 residues: Uridylate kinase (241 aa).

ATP-binding positions include 10–13 (KLSG), glycine 53, and arginine 57. Residues aspartate 72 and 133 to 140 (AGSPYFST) contribute to the UMP site. Asparagine 161, tyrosine 167, and aspartate 170 together coordinate ATP.

It belongs to the UMP kinase family. In terms of assembly, homohexamer.

It localises to the cytoplasm. It carries out the reaction UMP + ATP = UDP + ADP. It functions in the pathway pyrimidine metabolism; CTP biosynthesis via de novo pathway; UDP from UMP (UMPK route): step 1/1. Inhibited by UTP. In terms of biological role, catalyzes the reversible phosphorylation of UMP to UDP. This is Uridylate kinase from Aster yellows witches'-broom phytoplasma (strain AYWB).